A 264-amino-acid polypeptide reads, in one-letter code: GTP cyclohydrolase FolE2 (264 aa).

The protein belongs to the GTP cyclohydrolase IV family.

The enzyme catalyses GTP + H2O = 7,8-dihydroneopterin 3'-triphosphate + formate + H(+). Its pathway is cofactor biosynthesis; 7,8-dihydroneopterin triphosphate biosynthesis; 7,8-dihydroneopterin triphosphate from GTP: step 1/1. Converts GTP to 7,8-dihydroneopterin triphosphate. The protein is GTP cyclohydrolase FolE2 of Vesicomyosocius okutanii subsp. Calyptogena okutanii (strain HA).